The chain runs to 382 residues: Dual-specificity RNA methyltransferase RlmN (382 aa).

Glu-91 (proton acceptor) is an active-site residue. The Radical SAM core domain maps to 97 to 339; that stretch reads EEDRGTLCIS…TTIRKTRGDD (243 aa). Cys-104 and Cys-344 are joined by a disulfide. Positions 111, 115, and 118 each coordinate [4Fe-4S] cluster. Residues 165–166, Ser-197, 219–221, and Asn-301 contribute to the S-adenosyl-L-methionine site; these read GE and SLH. Cys-344 acts as the S-methylcysteine intermediate in catalysis.

The protein belongs to the radical SAM superfamily. RlmN family. [4Fe-4S] cluster serves as cofactor.

The protein localises to the cytoplasm. It catalyses the reaction adenosine(2503) in 23S rRNA + 2 reduced [2Fe-2S]-[ferredoxin] + 2 S-adenosyl-L-methionine = 2-methyladenosine(2503) in 23S rRNA + 5'-deoxyadenosine + L-methionine + 2 oxidized [2Fe-2S]-[ferredoxin] + S-adenosyl-L-homocysteine. The catalysed reaction is adenosine(37) in tRNA + 2 reduced [2Fe-2S]-[ferredoxin] + 2 S-adenosyl-L-methionine = 2-methyladenosine(37) in tRNA + 5'-deoxyadenosine + L-methionine + 2 oxidized [2Fe-2S]-[ferredoxin] + S-adenosyl-L-homocysteine. Its function is as follows. Specifically methylates position 2 of adenine 2503 in 23S rRNA and position 2 of adenine 37 in tRNAs. m2A2503 modification seems to play a crucial role in the proofreading step occurring at the peptidyl transferase center and thus would serve to optimize ribosomal fidelity. The sequence is that of Dual-specificity RNA methyltransferase RlmN from Albidiferax ferrireducens (strain ATCC BAA-621 / DSM 15236 / T118) (Rhodoferax ferrireducens).